A 635-amino-acid polypeptide reads, in one-letter code: Rab11 family-interacting protein 4 (635 aa).

The 36-residue stretch at 49 to 84 folds into the EF-hand domain; the sequence is GQGEEVEKLVKCLDPNDLGRINFKDFCRGVFAMKGC. Ca(2+)-binding residues include D62, N64, R68, and D73. Positions 82-635 are necessary for interaction with RAB11A, subcellular location, homo- or heterooligomerization; the sequence is KGCEELLKDV…HNPSILEIKH (554 aa). 2 disordered regions span residues 147-176 and 216-258; these read GPQE…EKEP and EDYG…QTPR. Positions 216-225 are enriched in acidic residues; that stretch reads EDYGEGDDVD. Residues 279-615 adopt a coiled-coil conformation; sequence KINLLNDLEA…EEINFRLRQY (337 aa). The region spanning 572–634 is the FIP-RBD domain; sequence EAKNLFATQT…DHNPSILEIK (63 aa).

Homodimer. Forms a complex with Rab11 (RAB11A or RAB11B) and ARF6. Interacts with RAB11A; the interaction is direct. Forms a heterooligomeric complex with RAB11FIP2, RAB11FIP3 and RAB11FIP5. Interacts with ECPAS. Strongly expressed in the developing retina. Expressed predominantly in neural tissues.

The protein resides in the recycling endosome membrane. Its subcellular location is the cleavage furrow. It is found in the midbody. The protein localises to the cytoplasmic vesicle. Functionally, acts as a regulator of endocytic traffic by participating in membrane delivery. Required for the abscission step in cytokinesis, possibly by acting as an 'address tag' delivering recycling endosome membranes to the cleavage furrow during late cytokinesis. May play a role in differentiation during retinal development, in a Rab11-independent manner. This is Rab11 family-interacting protein 4 (Rab11fip4) from Mus musculus (Mouse).